We begin with the raw amino-acid sequence, 122 residues long: UPF0102 protein Cgl2031/cg2228 (122 aa).

The protein belongs to the UPF0102 family.

This chain is UPF0102 protein Cgl2031/cg2228, found in Corynebacterium glutamicum (strain ATCC 13032 / DSM 20300 / JCM 1318 / BCRC 11384 / CCUG 27702 / LMG 3730 / NBRC 12168 / NCIMB 10025 / NRRL B-2784 / 534).